The sequence spans 326 residues: Peroxidase 43 (326 aa).

An N-terminal signal peptide occupies residues 1-24; the sequence is MVWANAKMRLALSLVTVFFGISLA. 4 cysteine pairs are disulfide-bonded: C35-C112, C68-C73, C118-C322, and C196-C228. H66 serves as the catalytic Proton acceptor. Ca(2+) is bound by residues D67, V70, G72, D74, and S76. An N-linked (GlcNAc...) asparagine glycan is attached at N151. P159 contacts substrate. Residue H189 coordinates heme b. T190 serves as a coordination point for Ca(2+). Residues D241, S244, and D249 each contribute to the Ca(2+) site.

The protein belongs to the peroxidase family. Classical plant (class III) peroxidase subfamily. Heme b serves as cofactor. Requires Ca(2+) as cofactor.

The protein resides in the secreted. The catalysed reaction is 2 a phenolic donor + H2O2 = 2 a phenolic radical donor + 2 H2O. In terms of biological role, removal of H(2)O(2), oxidation of toxic reductants, biosynthesis and degradation of lignin, suberization, auxin catabolism, response to environmental stresses such as wounding, pathogen attack and oxidative stress. These functions might be dependent on each isozyme/isoform in each plant tissue. This Arabidopsis thaliana (Mouse-ear cress) protein is Peroxidase 43 (PER43).